A 521-amino-acid chain; its full sequence is Forkhead box protein N4 (521 aa).

The fork-head DNA-binding region spans 197–293 (KPIYSYSCLI…EEMHKWKRKD (97 aa)). A disordered region spans residues 371-406 (PQAHLAPDSPAPAQTPPLHALPSLSPGPLPQPAMGR).

In terms of tissue distribution, mainly expressed in proliferator progenitor cells in brain and retina rather than differentiated cells. In contrast, is expressed only in postmitotic epithelial cells rather than in proliferative progenitors in the proximal airway.

The protein resides in the nucleus. Functionally, transcription factor essential for neural and some non-neural tissues development, such as retina and lung respectively. Binds to an 11-bp consensus sequence containing the invariant tetranucleotide 5'-ACGC-3'. During development of the central nervous system, is required to specify the amacrine and horizontal cell fates from multipotent retinal progenitors while suppressing the alternative photoreceptor cell fates through activating DLL4-NOTCH signaling. Also acts synergistically with ASCL1/MASH1 to activate DLL4-NOTCH signaling and drive commitment of p2 progenitors to the V2b interneuron fates during spinal cord neurogenesis. In development of non-neural tissues, plays an essential role in the specification of the atrioventricular canal and is indirectly required for patterning the distal airway during lung development. In Mus musculus (Mouse), this protein is Forkhead box protein N4 (Foxn4).